Reading from the N-terminus, the 23-residue chain is Acidic phospholipase A2 Ts-A5 (23 aa).

Ca(2+) is required as a cofactor. Post-translationally, contains 7 disulfide bonds. In terms of tissue distribution, expressed by the venom gland.

The protein localises to the secreted. It carries out the reaction a 1,2-diacyl-sn-glycero-3-phosphocholine + H2O = a 1-acyl-sn-glycero-3-phosphocholine + a fatty acid + H(+). Snake venom phospholipase A2 (PLA2) that shows a moderate inhibition of ADP-induced human platelet aggregation when tested on platelet rich plasma. Exhibits high hydrolytic activities and prefers the anionic micelles (dPPC with deoxycholate) to the zwitterionic micelles (dPPC with Triton X-100). PLA2 catalyzes the calcium-dependent hydrolysis of the 2-acyl groups in 3-sn-phosphoglycerides. The sequence is that of Acidic phospholipase A2 Ts-A5 from Trimeresurus stejnegeri (Chinese green tree viper).